The chain runs to 305 residues: Type II secretion system protein C (305 aa).

Residues 1 to 29 are Cytoplasmic-facing; it reads MEFKQLPPLAAWPRLLSQNTLRWQKPISE. The chain crosses the membrane as a helical span at residues 30 to 50; the sequence is GLTLLLLVASAWTLGKMVWVV. Topologically, residues 51–305 are periplasmic; that stretch reads SAEQTPVPTW…GQQHDVYIQF (255 aa).

Belongs to the GSP C family.

Its subcellular location is the cell inner membrane. Its function is as follows. Involved in a type II secretion system (T2SS, formerly general secretion pathway, GSP) for the export of proteins. Required for secretion of cholera toxin through the outer membrane. In Vibrio cholerae serotype O1 (strain ATCC 39315 / El Tor Inaba N16961), this protein is Type II secretion system protein C (epsC).